Reading from the N-terminus, the 159-residue chain is Flagellar assembly factor FliW (159 aa).

This sequence belongs to the FliW family. Interacts with translational regulator CsrA and flagellin(s).

The protein localises to the cytoplasm. Functionally, acts as an anti-CsrA protein, binds CsrA and prevents it from repressing translation of its target genes, one of which is flagellin. Binds to flagellin and participates in the assembly of the flagellum. The polypeptide is Flagellar assembly factor FliW (Geobacter sulfurreducens (strain ATCC 51573 / DSM 12127 / PCA)).